Here is a 463-residue protein sequence, read N- to C-terminus: MALPGSLNRYLLLMAQEHLEFRLPEIKSLLSVIGGQFTNSQETYGKSPFWILNIPSEDIARNLMKRTVCAKSLFELWGHGKSPEELYSSLKSYPVEKMVPFLHSDSTYKIKIHTFNKTLTQEEKVKRIDALEFLPFEGKVNLKKPQHVFSILEDYGLDPNCIPENPHNIYFGRWIADGQRELIESYSVKKRHFIGNTSMDAGLSFIMANHAKVKENDLVFDPFVGTGGLLIASAHFGAYVCGTDIDYNTVHGLGKASRKNQKWRGPDENIRANLRQYGLEKFYLDVLVSDASKPSWRKGTYFDAIITDPPYGIRESTRRTGSQKEILKGIEKCPESHVPVSLTYHLSDMFLDLINFAAETLVLGGRLVYWLPVYTPEYTEKMVPWHPCLRLVSNCEQKLSSHTARRLITMEKVKEFENPDEYSRLLSDHFLPYQGHNSFREKYFSGVTKRIATEEQCSHEGKL.

Position 2 is an N-acetylalanine (alanine 2).

It belongs to the class I-like SAM-binding methyltransferase superfamily. TRM11 methyltransferase family. In terms of assembly, part of the heterodimeric TRMT11-TRM112 methyltransferase complex; this complex forms an active tRNA methyltransferase, where TRMT112 acts as an activator of the catalytic subunit TRMT11.

It is found in the cytoplasm. The enzyme catalyses guanosine(10) in tRNA + S-adenosyl-L-methionine = N(2)-methylguanosine(10) in tRNA + S-adenosyl-L-homocysteine + H(+). Functionally, catalytic subunit of the TRMT11-TRM112 methyltransferase complex, that specifically mediates the S-adenosyl-L-methionine-dependent N(2)-methylation of guanosine nucleotide at position 10 (m2G10) in tRNAs. This is one of the major tRNA (guanine-N(2))-methyltransferases. The chain is tRNA (guanine(10)-N(2))-methyltransferase TRMT11 from Rattus norvegicus (Rat).